The sequence spans 243 residues: Eukaryotic translation initiation factor 4E-2 (243 aa).

The protein belongs to the eukaryotic initiation factor 4E family. EIF4F is a multi-subunit complex, the composition of which varies with external and internal environmental conditions. It is composed of at least eIF4A, eIF4E and eIF4G. eIF4E is also known to interact with other partners.

In terms of biological role, recognizes and binds the 7-methylguanosine-containing mRNA cap during an early step in the initiation of protein synthesis and facilitates ribosome binding by inducing the unwinding of the mRNAs secondary structures. The protein is Eukaryotic translation initiation factor 4E-2 (tif452) of Schizosaccharomyces pombe (strain 972 / ATCC 24843) (Fission yeast).